The sequence spans 280 residues: Lysosome-associated membrane glycoprotein 5 (280 aa).

An N-terminal signal peptide occupies residues 1 to 29 (MDLRRRALLGVDGLRVLLMLFHTVTRIMA). At 30–235 (EQEVENLSGL…PVDEREQLEE (206 aa)) the chain is on the extracellular side. N-linked (GlcNAc...) asparagine glycosylation is found at Asn-35 and Asn-53. The chain crosses the membrane as a helical span at residues 236 to 256 (TLPLILGLILGLVIVVTLVIY). Residues 257–280 (HIHHKMTANQVQIPRDRSQYKHMG) are Cytoplasmic-facing.

It belongs to the LAMP family. Post-translationally, glycosylated.

The protein resides in the cytoplasmic vesicle membrane. It is found in the cell membrane. It localises to the cell projection. The protein localises to the dendrite. Its subcellular location is the cytoplasmic vesicle. The protein resides in the secretory vesicle. It is found in the synaptic vesicle membrane. It localises to the growth cone membrane. The protein localises to the early endosome membrane. Its subcellular location is the recycling endosome. The protein resides in the endoplasmic reticulum-Golgi intermediate compartment membrane. It is found in the endosome membrane. In terms of biological role, plays a role in short-term synaptic plasticity in a subset of GABAergic neurons in the brain. The polypeptide is Lysosome-associated membrane glycoprotein 5 (LAMP5) (Bos taurus (Bovine)).